A 413-amino-acid chain; its full sequence is Serine hydroxymethyltransferase (413 aa).

Residues Leu-115 and 119–121 (GHL) contribute to the (6S)-5,6,7,8-tetrahydrofolate site. N6-(pyridoxal phosphate)lysine is present on Lys-224.

Belongs to the SHMT family. As to quaternary structure, homodimer. The cofactor is pyridoxal 5'-phosphate.

The protein localises to the cytoplasm. It carries out the reaction (6R)-5,10-methylene-5,6,7,8-tetrahydrofolate + glycine + H2O = (6S)-5,6,7,8-tetrahydrofolate + L-serine. It participates in one-carbon metabolism; tetrahydrofolate interconversion. The protein operates within amino-acid biosynthesis; glycine biosynthesis; glycine from L-serine: step 1/1. In terms of biological role, catalyzes the reversible interconversion of serine and glycine with tetrahydrofolate (THF) serving as the one-carbon carrier. This reaction serves as the major source of one-carbon groups required for the biosynthesis of purines, thymidylate, methionine, and other important biomolecules. Also exhibits THF-independent aldolase activity toward beta-hydroxyamino acids, producing glycine and aldehydes, via a retro-aldol mechanism. This chain is Serine hydroxymethyltransferase, found in Mycoplasma capricolum subsp. capricolum (strain California kid / ATCC 27343 / NCTC 10154).